The sequence spans 157 residues: F-box protein SNE (157 aa).

The region spanning 24-70 (PVFSINDHHDVLVEILRRLDGSSLCSAACVCRLWSAVARNDSIWEEL) is the F-box domain.

Part of a SCF (ASK-cullin-F-box) protein ligase complex. Interacts directly with SKP1A and SKP1B. As to expression, highly expressed in flowers and at much lower level in seedlings, rosette leaves and green siliques.

Its subcellular location is the nucleus. Its pathway is protein modification; protein ubiquitination. Functionally, essential component of a SCF-type E3 ligase complex that positively regulates the gibberellin signaling pathway. Upon gibberellin treatment, such complex probably mediates the ubiquitination and subsequent degradation of DELLA proteins (GAI, RGA and RGL2), some repressors of the gibberellin pathway, leading to activate the pathway. Can partially complement the absence of GID2/SLY1. This chain is F-box protein SNE (SNE), found in Arabidopsis thaliana (Mouse-ear cress).